Reading from the N-terminus, the 341-residue chain is GTP-binding protein REM 2 (341 aa).

Acidic residues predominate over residues 1–13 (MHTDLDTDMDADT). 2 disordered regions span residues 1-72 (MHTD…SMPV) and 84-106 (VDEL…GSGE). The segment covering 18–32 (LCSSSSRQASPSGTP) has biased composition (polar residues). Position 27 is a phosphoserine (Ser27). Residues 43-54 (QKPEKLLAELDR) are compositionally biased toward basic and acidic residues. The segment covering 94–105 (SSSGSSDSLGSG) has biased composition (low complexity). GTP-binding positions include 122-129 (GESGVGKS), 230-233 (NKSD), and 261-262 (AA). The segment at 282 to 309 (RGRGHAGGQRPEPSSPDGPAPPTRRESL) is disordered. The segment covering 294-303 (PSSPDGPAPP) has biased composition (pro residues). Ser296 carries the phosphoserine modification.

It belongs to the small GTPase superfamily. RGK family. Expressed in brain and kidney.

The protein localises to the cell membrane. Its function is as follows. Binds GTP saturably and exhibits a low intrinsic rate of GTP hydrolysis. The polypeptide is GTP-binding protein REM 2 (Rem2) (Rattus norvegicus (Rat)).